Here is a 348-residue protein sequence, read N- to C-terminus: Pyruvate dehydrogenase E1 component subunit alpha (348 aa).

The interval 1–21 (MAPRKSASVSSRKTAAKPAKK) is disordered.

Heterodimer of an alpha and a beta chain. Thiamine diphosphate serves as cofactor.

The enzyme catalyses N(6)-[(R)-lipoyl]-L-lysyl-[protein] + pyruvate + H(+) = N(6)-[(R)-S(8)-acetyldihydrolipoyl]-L-lysyl-[protein] + CO2. Its function is as follows. The pyruvate dehydrogenase complex catalyzes the overall conversion of pyruvate to acetyl-CoA and CO(2). It contains multiple copies of three enzymatic components: pyruvate dehydrogenase (E1), dihydrolipoamide acetyltransferase (E2) and lipoamide dehydrogenase (E3). In Rhizobium meliloti (strain 1021) (Ensifer meliloti), this protein is Pyruvate dehydrogenase E1 component subunit alpha (pdhA).